We begin with the raw amino-acid sequence, 65 residues long: Photosystem II reaction center protein Z (65 aa).

2 helical membrane passes run 8–28 and 41–61; these read AVFA…VALA and YAGA…DSVV.

The protein belongs to the PsbZ family. PSII is composed of 1 copy each of membrane proteins PsbA, PsbB, PsbC, PsbD, PsbE, PsbF, PsbH, PsbI, PsbJ, PsbK, PsbL, PsbM, PsbT, PsbX, PsbY, PsbZ, Psb30/Ycf12, at least 3 peripheral proteins of the oxygen-evolving complex and a large number of cofactors. It forms dimeric complexes.

It is found in the plastid. The protein resides in the cyanelle thylakoid membrane. In terms of biological role, may control the interaction of photosystem II (PSII) cores with the light-harvesting antenna, regulates electron flow through the 2 photosystem reaction centers. PSII is a light-driven water plastoquinone oxidoreductase, using light energy to abstract electrons from H(2)O, generating a proton gradient subsequently used for ATP formation. This is Photosystem II reaction center protein Z from Cyanophora paradoxa.